The primary structure comprises 170 residues: Small ribosomal subunit protein eS7 (170 aa).

This sequence belongs to the eukaryotic ribosomal protein eS7 family. Component of the small ribosomal subunit.

The protein resides in the cytoplasm. The protein is Small ribosomal subunit protein eS7 (RPS7) of Encephalitozoon cuniculi (strain GB-M1) (Microsporidian parasite).